A 256-amino-acid chain; its full sequence is UPF0644 protein PB2B4.06 (256 aa).

The chain crosses the membrane as a helical span at residues 34–56 (GVVYAGVSGTCAAAGYMFGNFVM).

It belongs to the UPF0644 family.

The protein resides in the mitochondrion membrane. This chain is UPF0644 protein PB2B4.06, found in Schizosaccharomyces pombe (strain 972 / ATCC 24843) (Fission yeast).